The following is a 369-amino-acid chain: Anhydro-N-acetylmuramic acid kinase (369 aa).

12 to 19 (GTSLDGVD) contributes to the ATP binding site.

It belongs to the anhydro-N-acetylmuramic acid kinase family.

It catalyses the reaction 1,6-anhydro-N-acetyl-beta-muramate + ATP + H2O = N-acetyl-D-muramate 6-phosphate + ADP + H(+). It participates in amino-sugar metabolism; 1,6-anhydro-N-acetylmuramate degradation. The protein operates within cell wall biogenesis; peptidoglycan recycling. In terms of biological role, catalyzes the specific phosphorylation of 1,6-anhydro-N-acetylmuramic acid (anhMurNAc) with the simultaneous cleavage of the 1,6-anhydro ring, generating MurNAc-6-P. Is required for the utilization of anhMurNAc either imported from the medium or derived from its own cell wall murein, and thus plays a role in cell wall recycling. This chain is Anhydro-N-acetylmuramic acid kinase, found in Shigella boydii serotype 4 (strain Sb227).